Reading from the N-terminus, the 367-residue chain is 4-hydroxy-3-methylbut-2-en-1-yl diphosphate synthase (flavodoxin) (367 aa).

Residues Cys-265, Cys-268, Cys-300, and Glu-307 each coordinate [4Fe-4S] cluster.

This sequence belongs to the IspG family. It depends on [4Fe-4S] cluster as a cofactor.

The catalysed reaction is (2E)-4-hydroxy-3-methylbut-2-enyl diphosphate + oxidized [flavodoxin] + H2O + 2 H(+) = 2-C-methyl-D-erythritol 2,4-cyclic diphosphate + reduced [flavodoxin]. The protein operates within isoprenoid biosynthesis; isopentenyl diphosphate biosynthesis via DXP pathway; isopentenyl diphosphate from 1-deoxy-D-xylulose 5-phosphate: step 5/6. Its function is as follows. Converts 2C-methyl-D-erythritol 2,4-cyclodiphosphate (ME-2,4cPP) into 1-hydroxy-2-methyl-2-(E)-butenyl 4-diphosphate. In Bacillus cereus (strain ATCC 10987 / NRS 248), this protein is 4-hydroxy-3-methylbut-2-en-1-yl diphosphate synthase (flavodoxin).